The following is a 141-amino-acid chain: Large ribosomal subunit protein uL16 (141 aa).

It belongs to the universal ribosomal protein uL16 family. In terms of assembly, part of the 50S ribosomal subunit.

Functionally, binds 23S rRNA and is also seen to make contacts with the A and possibly P site tRNAs. The protein is Large ribosomal subunit protein uL16 of Campylobacter lari (strain RM2100 / D67 / ATCC BAA-1060).